The following is a 163-amino-acid chain: Putative defense protein 3 (163 aa).

Residues 1-18 form the signal peptide; the sequence is MMFAYIVAVVSALALTSA. The region spanning 19 to 163 is the Reelin domain; the sequence is YPTGAPSSTC…SAPVTVLSHK (145 aa). Cys-28 and Cys-103 form a disulfide bridge.

It belongs to the insect defense protein family.

It localises to the secreted. Functionally, may have antimicrobial activity. The chain is Putative defense protein 3 from Antheraea mylitta (Tasar silkworm).